The sequence spans 251 residues: Imidazole glycerol phosphate synthase subunit HisF (251 aa).

Active-site residues include Asp-10 and Asp-129.

This sequence belongs to the HisA/HisF family. Heterodimer of HisH and HisF.

Its subcellular location is the cytoplasm. The catalysed reaction is 5-[(5-phospho-1-deoxy-D-ribulos-1-ylimino)methylamino]-1-(5-phospho-beta-D-ribosyl)imidazole-4-carboxamide + L-glutamine = D-erythro-1-(imidazol-4-yl)glycerol 3-phosphate + 5-amino-1-(5-phospho-beta-D-ribosyl)imidazole-4-carboxamide + L-glutamate + H(+). It functions in the pathway amino-acid biosynthesis; L-histidine biosynthesis; L-histidine from 5-phospho-alpha-D-ribose 1-diphosphate: step 5/9. IGPS catalyzes the conversion of PRFAR and glutamine to IGP, AICAR and glutamate. The HisF subunit catalyzes the cyclization activity that produces IGP and AICAR from PRFAR using the ammonia provided by the HisH subunit. The protein is Imidazole glycerol phosphate synthase subunit HisF of Cutibacterium acnes (strain DSM 16379 / KPA171202) (Propionibacterium acnes).